A 286-amino-acid chain; its full sequence is ATP synthase gamma chain (286 aa).

It belongs to the ATPase gamma chain family. F-type ATPases have 2 components, CF(1) - the catalytic core - and CF(0) - the membrane proton channel. CF(1) has five subunits: alpha(3), beta(3), gamma(1), delta(1), epsilon(1). CF(0) has three main subunits: a, b and c.

Its subcellular location is the cell inner membrane. In terms of biological role, produces ATP from ADP in the presence of a proton gradient across the membrane. The gamma chain is believed to be important in regulating ATPase activity and the flow of protons through the CF(0) complex. The polypeptide is ATP synthase gamma chain (Fuscovulum blasticum (Rhodobacter blasticus)).